Reading from the N-terminus, the 359-residue chain is Maleylacetate reductase 2 (359 aa).

This sequence belongs to the iron-containing alcohol dehydrogenase family. In terms of assembly, homodimer.

It carries out the reaction 3-oxoadipate + NAD(+) = maleylacetate + NADH + H(+). The enzyme catalyses 3-oxoadipate + NADP(+) = maleylacetate + NADPH + H(+). It functions in the pathway aromatic compound metabolism; 3-chlorocatechol degradation. Its activity is regulated as follows. Inhibited by p-chloromercuribenzoate and by 3-oxoadipate, and, in a temperature-dependent manner, by manganese. Its function is as follows. Plays a major role in the degradation of chloroaromatic compounds by channeling maleylacetate and some of its substituted derivatives into the 3-oxoadipate pathway. This enzyme converts maleylacetate and 2-chloromaleylacetate with similar efficiencies. NADH is preferred to NADPH as the cosubstrate. In Cupriavidus pinatubonensis (strain JMP 134 / LMG 1197) (Cupriavidus necator (strain JMP 134)), this protein is Maleylacetate reductase 2 (tfdFII).